Consider the following 745-residue polypeptide: Protein PHOX1 (745 aa).

Residues 1-10 (MGKPTGKKKN) are compositionally biased toward basic residues. The segment at 1-37 (MGKPTGKKKNNNYTEMPPTESSTTGGGKTGKSFDRSA) is disordered. TPR repeat units follow at residues 52-85 (ALEL…LPRD), 90-125 (AYLR…SPRF), and 126-159 (SKAL…EPEN). The region spanning 280-359 (TRTVKLVHGD…GSFRLYIAEV (80 aa)) is the PB1 domain. 4 TPR repeats span residues 406-441 (EHWI…YTEA), 443-472 (EDIV…AMFN), 494-528 (ETIL…KSDF), and 553-586 (GEVD…WEEM).

As to quaternary structure, interacts with myosin XI-1 and XI-K.

It is found in the cytoplasmic vesicle membrane. Carboxylate clamp type tetratricopeptide repeat protein that may act as a potential Hsp90/Hsp70 co-chaperone. Contributes to polar growth of root hairs. The polypeptide is Protein PHOX1 (Arabidopsis thaliana (Mouse-ear cress)).